We begin with the raw amino-acid sequence, 120 residues long: Large ribosomal subunit protein bL20 (120 aa).

It belongs to the bacterial ribosomal protein bL20 family.

In terms of biological role, binds directly to 23S ribosomal RNA and is necessary for the in vitro assembly process of the 50S ribosomal subunit. It is not involved in the protein synthesizing functions of that subunit. The sequence is that of Large ribosomal subunit protein bL20 from Ligilactobacillus salivarius (strain UCC118) (Lactobacillus salivarius).